Reading from the N-terminus, the 65-residue chain is Large ribosomal subunit protein bL35 (65 aa).

This sequence belongs to the bacterial ribosomal protein bL35 family.

This is Large ribosomal subunit protein bL35 from Synechococcus sp. (strain CC9605).